The chain runs to 492 residues: FAD-linked oxidoreductase pgmH (492 aa).

The region spanning 54-224 (SIRLATLVVY…TEFKYRVHKQ (171 aa)) is the FAD-binding PCMH-type domain.

This sequence belongs to the oxygen-dependent FAD-linked oxidoreductase family. FAD serves as cofactor.

It participates in pigment biosynthesis. It functions in the pathway secondary metabolite biosynthesis. Its function is as follows. FAD-linked oxidoreductase; part of the gene cluster that mediates the biosynthesis of pleosporalin A, ascomycone A, as well as a third cryptic naphthoquinone derived pigment, all responsible for the coloration of conidia. Essential for the production of pleosporalin A, but not the 2 other final products. The pathway begins with the biosynthesis of the cyclized heptaketide 3-acetonyl-1,6,8-trihydroxy-2-naphthaldehyde by the NR-PKS pgmA. The C-6 hydroxyl group is further methylated by the O-methyltransferase pgmB to yield fusarubinaldehyde which is in turn oxidized by the cytochrome P450 monooxygenase pgmC at C-9. The C-1 hydroxyl group is then methylated spontaneously. Although pgmE, pgmD and pgmH are essential for the production of pleosporalin A, it is not the case for the 2 other final products and it remains difficult to assign a specific function to each enzyme. PgmF and pgmG seem not to be involved in pigment biosynthesis although they were regulated by the cluster-specific transcription factor pgmR. This chain is FAD-linked oxidoreductase pgmH, found in Aspergillus terreus.